A 427-amino-acid polypeptide reads, in one-letter code: Glutamate-1-semialdehyde 2,1-aminomutase (427 aa).

The residue at position 265 (Lys265) is an N6-(pyridoxal phosphate)lysine.

The protein belongs to the class-III pyridoxal-phosphate-dependent aminotransferase family. HemL subfamily. In terms of assembly, homodimer. The cofactor is pyridoxal 5'-phosphate.

The protein resides in the cytoplasm. The catalysed reaction is (S)-4-amino-5-oxopentanoate = 5-aminolevulinate. It functions in the pathway porphyrin-containing compound metabolism; protoporphyrin-IX biosynthesis; 5-aminolevulinate from L-glutamyl-tRNA(Glu): step 2/2. The protein is Glutamate-1-semialdehyde 2,1-aminomutase of Pseudomonas entomophila (strain L48).